We begin with the raw amino-acid sequence, 403 residues long: Mitochondrial intermembrane space import and assembly protein 40 (403 aa).

The N-terminal 31 residues, 1–31 (MLRNLVVRNACRNRPSIQVARGLCRHQTRRL), are a transit peptide targeting the mitochondrion. Residues 33-46 (ASSPQFGRNSNQEK) lie on the Mitochondrial matrix side of the membrane. Residues 47–66 (TAGFIMGILSMAGALYFIAP) form a helical; Signal-anchor for type II membrane protein membrane-spanning segment. Topologically, residues 67–403 (NRKPLFASRK…KEPLNEESKP (337 aa)) are mitochondrial intermembrane. Composition is skewed to basic and acidic residues over residues 75–84 (RKVESDKTAE), 101–118 (NNSK…KNDE), 147–168 (EDNK…KDDE), 206–230 (SEKK…KTTT), and 262–271 (EELRKQEEKQ). The disordered stretch occupies residues 75-292 (RKVESDKTAE…GAYNPDTGEI (218 aa)). Disulfide bonds link cysteine 296/cysteine 298, cysteine 307/cysteine 340, and cysteine 317/cysteine 330. Residues 304-348 (HGPCGEEFKSAFSCFVYSEAEPKGIDCVEKFQHMQDCFRKYPEHY) enclose the CHCH domain. Short sequence motifs (cx9C motif) lie at residues 307–317 (CGEEFKSAFSC) and 330–340 (CVEKFQHMQDC). A disordered region spans residues 351–403 (QLKETSDDEEPQDKVKVNTIESAPNVSSAKENAAKKAEQSDVKKEPLNEESKP). The span at 369 to 378 (TIESAPNVSS) shows a compositional bias: polar residues. A compositionally biased stretch (basic and acidic residues) spans 382–403 (NAAKKAEQSDVKKEPLNEESKP).

Monomer. Interacts with the FAD-linked sulfhydryl oxidase ERV1 and with the substrate proteins COX17, TIM9, and TIM13, forming transient intermolecular disulfide bridges. Interacts with FCJ1. It depends on Cu(2+) as a cofactor. Zn(2+) is required as a cofactor.

The protein resides in the mitochondrion inner membrane. Required for the import and folding of small cysteine-containing proteins (small Tim) in the mitochondrial intermembrane space (IMS). Forms a redox cycle with ERV1 that involves a disulfide relay system. Precursor proteins to be imported into the IMS are translocated in their reduced form into the mitochondria. The oxidized form of MIA40 forms a transient intermolecular disulfide bridge with the reduced precursor protein, resulting in oxidation of the precursor protein that now contains an intramolecular disulfide bond and is able to undergo folding in the IMS. Reduced MIA40 is reoxidized by FAD-linked sulfhydryl oxidase ERV1. In Saccharomyces cerevisiae (strain ATCC 204508 / S288c) (Baker's yeast), this protein is Mitochondrial intermembrane space import and assembly protein 40 (MIA40).